A 130-amino-acid chain; its full sequence is Small ribosomal subunit protein uS11 (130 aa).

The protein belongs to the universal ribosomal protein uS11 family. In terms of assembly, part of the 30S ribosomal subunit. Interacts with proteins S7 and S18. Binds to IF-3.

In terms of biological role, located on the platform of the 30S subunit, it bridges several disparate RNA helices of the 16S rRNA. Forms part of the Shine-Dalgarno cleft in the 70S ribosome. The chain is Small ribosomal subunit protein uS11 from Latilactobacillus sakei subsp. sakei (strain 23K) (Lactobacillus sakei subsp. sakei).